Here is a 166-residue protein sequence, read N- to C-terminus: Ribosome maturation factor RimM (166 aa).

A PRC barrel domain is found at 91-165 (DDEFYHADLI…RIVADPPEGL (75 aa)).

This sequence belongs to the RimM family. As to quaternary structure, binds ribosomal protein uS19.

Its subcellular location is the cytoplasm. Its function is as follows. An accessory protein needed during the final step in the assembly of 30S ribosomal subunit, possibly for assembly of the head region. Essential for efficient processing of 16S rRNA. May be needed both before and after RbfA during the maturation of 16S rRNA. It has affinity for free ribosomal 30S subunits but not for 70S ribosomes. The polypeptide is Ribosome maturation factor RimM (Dinoroseobacter shibae (strain DSM 16493 / NCIMB 14021 / DFL 12)).